A 325-amino-acid polypeptide reads, in one-letter code: GMP reductase (325 aa).

Catalysis depends on Cys-174, which acts as the Thioimidate intermediate. NADP(+) is bound at residue 203 to 226; it reads LIADGGIRTHGDIAKSIRFGASMV.

It belongs to the IMPDH/GMPR family. GuaC type 2 subfamily.

It catalyses the reaction IMP + NH4(+) + NADP(+) = GMP + NADPH + 2 H(+). Functionally, catalyzes the irreversible NADPH-dependent deamination of GMP to IMP. It functions in the conversion of nucleobase, nucleoside and nucleotide derivatives of G to A nucleotides, and in maintaining the intracellular balance of A and G nucleotides. This chain is GMP reductase, found in Staphylococcus aureus (strain bovine RF122 / ET3-1).